The primary structure comprises 633 residues: Phosphomethylpyrimidine synthase (633 aa).

Residues Asn-245, Met-274, Tyr-303, His-339, 359 to 361 (SRG), 400 to 403 (DGLR), and Glu-439 contribute to the substrate site. His-443 provides a ligand contact to Zn(2+). Tyr-466 provides a ligand contact to substrate. His-507 contacts Zn(2+). Residues Cys-587, Cys-590, and Cys-595 each coordinate [4Fe-4S] cluster.

Belongs to the ThiC family. As to quaternary structure, homodimer. Requires [4Fe-4S] cluster as cofactor.

The catalysed reaction is 5-amino-1-(5-phospho-beta-D-ribosyl)imidazole + S-adenosyl-L-methionine = 4-amino-2-methyl-5-(phosphooxymethyl)pyrimidine + CO + 5'-deoxyadenosine + formate + L-methionine + 3 H(+). It functions in the pathway cofactor biosynthesis; thiamine diphosphate biosynthesis. Catalyzes the synthesis of the hydroxymethylpyrimidine phosphate (HMP-P) moiety of thiamine from aminoimidazole ribotide (AIR) in a radical S-adenosyl-L-methionine (SAM)-dependent reaction. The chain is Phosphomethylpyrimidine synthase from Neisseria meningitidis serogroup C (strain 053442).